A 193-amino-acid chain; its full sequence is Peptidyl-tRNA hydrolase (193 aa).

Position 15 (Tyr-15) interacts with tRNA. Catalysis depends on His-20, which acts as the Proton acceptor. TRNA-binding residues include Phe-65, Asn-67, and Asn-113.

This sequence belongs to the PTH family. In terms of assembly, monomer.

It is found in the cytoplasm. The enzyme catalyses an N-acyl-L-alpha-aminoacyl-tRNA + H2O = an N-acyl-L-amino acid + a tRNA + H(+). Its function is as follows. Hydrolyzes ribosome-free peptidyl-tRNAs (with 1 or more amino acids incorporated), which drop off the ribosome during protein synthesis, or as a result of ribosome stalling. In terms of biological role, catalyzes the release of premature peptidyl moieties from peptidyl-tRNA molecules trapped in stalled 50S ribosomal subunits, and thus maintains levels of free tRNAs and 50S ribosomes. The polypeptide is Peptidyl-tRNA hydrolase (Ehrlichia ruminantium (strain Gardel)).